The chain runs to 356 residues: Dihydroorotate dehydrogenase (quinone) (356 aa).

Residues 68-72 and T92 each bind FMN; that span reads AGFDK. K72 lines the substrate pocket. 117-121 lines the substrate pocket; it reads NRMGF. 2 residues coordinate FMN: N145 and N178. N178 is a substrate binding site. S181 serves as the catalytic Nucleophile. N183 provides a ligand contact to substrate. FMN-binding residues include K214 and T242. Residue 243–244 participates in substrate binding; that stretch reads NT. Residues G266, G295, and 316-317 contribute to the FMN site; that span reads YT.

Belongs to the dihydroorotate dehydrogenase family. Type 2 subfamily. As to quaternary structure, monomer. FMN serves as cofactor.

It is found in the cell membrane. The enzyme catalyses (S)-dihydroorotate + a quinone = orotate + a quinol. It functions in the pathway pyrimidine metabolism; UMP biosynthesis via de novo pathway; orotate from (S)-dihydroorotate (quinone route): step 1/1. Functionally, catalyzes the conversion of dihydroorotate to orotate with quinone as electron acceptor. The protein is Dihydroorotate dehydrogenase (quinone) of Mycobacterium sp. (strain KMS).